We begin with the raw amino-acid sequence, 702 residues long: Serotransferrin-A (702 aa).

The N-terminal stretch at 1–19 is a signal peptide; sequence MDLSLRVALCLSMLALCLA. Transferrin-like domains are found at residues 26–340 and 353–685; these read VRWC…ALKE and VRWC…SLNK. Disulfide bonds link cysteine 29/cysteine 64 and cysteine 39/cysteine 55. Aspartate 79 and tyrosine 111 together coordinate Fe(3+). Intrachain disulfides connect cysteine 134/cysteine 217, cysteine 179/cysteine 192, and cysteine 245/cysteine 259. Positions 136, 140, 142, and 143 each coordinate hydrogencarbonate. Tyrosine 211 is a Fe(3+) binding site. Histidine 267 serves as a coordination point for Fe(3+). The interval 340–349 is connecting region; sequence EGVKEDDSAA. 2 disulfides stabilise this stretch: cysteine 356/cysteine 388 and cysteine 366/cysteine 379. Positions 403 and 442 each coordinate Fe(3+). 7 disulfides stabilise this stretch: cysteine 413–cysteine 697, cysteine 431–cysteine 658, cysteine 465–cysteine 544, cysteine 489–cysteine 686, cysteine 499–cysteine 513, cysteine 510–cysteine 527, and cysteine 584–cysteine 598. Residues threonine 467, arginine 471, alanine 473, and glycine 474 each contribute to the hydrogencarbonate site. Tyrosine 538 is a binding site for Fe(3+). Histidine 606 is a Fe(3+) binding site.

It belongs to the transferrin family. Monomer. As to expression, plasma.

It localises to the secreted. In terms of biological role, transferrins are iron binding transport proteins which can bind two Fe(3+) ions in association with the binding of an anion, usually bicarbonate. It is responsible for the transport of iron from sites of absorption and heme degradation to those of storage and utilization. Serum transferrin may also have a further role in stimulating cell proliferation. The chain is Serotransferrin-A (tf-a) from Xenopus laevis (African clawed frog).